The following is a 250-amino-acid chain: Undecaprenyl-diphosphatase (250 aa).

7 consecutive transmembrane segments (helical) span residues 35–55 (DLSVFALLHLATLAAIVIFVG), 73–93 (INLTLKIIVSTIPAAIFGVLL), 100–120 (SLSNLKIISFFFLVTSAALLI), 146–166 (ALAIFPGISRSGFTLFGSLLI), 171–191 (EIALKYSFLVSIPVILGAGLL), 200–220 (SYSISSAIVAFFFGLLSLFIL), and 229–249 (LKIFSAYCIFISIFSFVLGGI).

It belongs to the UppP family.

The protein resides in the cell inner membrane. The catalysed reaction is di-trans,octa-cis-undecaprenyl diphosphate + H2O = di-trans,octa-cis-undecaprenyl phosphate + phosphate + H(+). Functionally, catalyzes the dephosphorylation of undecaprenyl diphosphate (UPP). Confers resistance to bacitracin. This chain is Undecaprenyl-diphosphatase, found in Thermosipho melanesiensis (strain DSM 12029 / CIP 104789 / BI429).